We begin with the raw amino-acid sequence, 385 residues long: dTDP-4-dehydro-2,3,6-trideoxy-D-glucose 4-aminotransferase (385 aa).

Lys-182 carries the post-translational modification N6-(pyridoxal phosphate)lysine.

It belongs to the DegT/DnrJ/EryC1 family. Homodimer. The cofactor is pyridoxal 5'-phosphate.

The enzyme catalyses dTDP-4-amino-2,3,4,6-tetradeoxy-alpha-D-erythro-hexopyranose + 2-oxoglutarate = dTDP-4-dehydro-2,3,6-trideoxy-alpha-D-hexopyranose + L-glutamate. Involved in the biosynthesis of forosamine ((4-dimethylamino)-2,3,4,6-tetradeoxy-alpha-D-threo-hexopyranose), a highly deoxygenated sugar component of several bioactive natural products such as the insecticidal spinosyns A and D. In the presence of pyridoxal 5'-phosphate (PLP) and alpha-ketoglutarate, catalyzes the C-4 transamination of dTDP-4-keto-2,3,6-trideoxy-alpha-D-glucose to yield dTDP-4-amino-2,3,4,6-tetradeoxy-alpha-D-glucose. It can also use pyruvate, but less efficiently than alpha-ketoglutarate. Also able to catalyze the C-4 transamination of dTDP-4-keto-2,6-dideoxy-alpha-D-glucose to yield dTDP-4-amino-2,4,6-trideoxy-D-glucose. The sequence is that of dTDP-4-dehydro-2,3,6-trideoxy-D-glucose 4-aminotransferase from Saccharopolyspora spinosa.